The primary structure comprises 232 residues: DOA4-independent degradation protein 4 (232 aa).

Residues Pro14–Arg97 adopt a coiled-coil conformation. Residues Leu183–Thr232 form an interaction with VPS4 region. The disordered stretch occupies residues Ile203–Thr232. An MIT-interacting motif motif is present at residues Asp219 to Lys229.

The protein belongs to the SNF7 family. As to quaternary structure, core component of the ESCRT-III complex (endosomal sorting required for transport complex III). ESCRT-III appears to be sequentially assembled as a flat lattice on the endosome membrane and forms a transient 450 kDa complex that contains DID4, oligomerized SNF7, VPS20 and VPS24. SNF7 oligomerization into a membrane-associated filament is nucleated by association of SNF7 with VPS20; the process is terminated through association of VPS24, possibly by capping the SNF7 filament. VPS24 subsequently associates with DID4/VPS2.

The protein resides in the cytoplasm. It is found in the endosome membrane. In terms of biological role, required for the sorting and concentration of proteins resulting in the entry of these proteins into the invaginating vesicles of the multivesicular body (MVB). Acts a component of the ESCRT-III complex, which appears to be critical for late steps in MVB sorting, such as membrane invagination and final cargo sorting and recruitment of late-acting components of the sorting machinery. The MVB pathway requires the sequential function of ESCRT-O, -I,-II and -III complex assemblies. Can directly stimulate VPS4 ATPase activity. The DID4/VPS2-VPS24 subcomplex is required for the VPS4-dependent dissociation of ESCRT-III. The sequence is that of DOA4-independent degradation protein 4 (DID4) from Saccharomyces cerevisiae (strain ATCC 204508 / S288c) (Baker's yeast).